Reading from the N-terminus, the 179-residue chain is Alkyl hydroperoxide reductase AhpD (179 aa).

The Proton donor role is filled by Cys130. Cys130 and Cys133 form a disulfide bridge. Cys133 serves as the catalytic Cysteine sulfenic acid (-SOH) intermediate.

It belongs to the AhpD family. In terms of assembly, homotrimer.

The enzyme catalyses N(6)-[(R)-dihydrolipoyl]-L-lysyl-[lipoyl-carrier protein] + a hydroperoxide = N(6)-[(R)-lipoyl]-L-lysyl-[lipoyl-carrier protein] + an alcohol + H2O. Its function is as follows. Antioxidant protein with alkyl hydroperoxidase activity. Required for the reduction of the AhpC active site cysteine residues and for the regeneration of the AhpC enzyme activity. In Nocardia farcinica (strain IFM 10152), this protein is Alkyl hydroperoxide reductase AhpD.